Consider the following 439-residue polypeptide: Tubulin beta chain (439 aa).

GTP is bound by residues Q11, E69, S138, G142, T143, G144, N204, and N226. Mg(2+) is bound at residue E69.

Belongs to the tubulin family. In terms of assembly, dimer of alpha and beta chains. A typical microtubule is a hollow water-filled tube with an outer diameter of 25 nm and an inner diameter of 15 nM. Alpha-beta heterodimers associate head-to-tail to form protofilaments running lengthwise along the microtubule wall with the beta-tubulin subunit facing the microtubule plus end conferring a structural polarity. Microtubules usually have 13 protofilaments but different protofilament numbers can be found in some organisms and specialized cells. Mg(2+) is required as a cofactor.

It localises to the cytoplasm. The protein resides in the cytoskeleton. Tubulin is the major constituent of microtubules, a cylinder consisting of laterally associated linear protofilaments composed of alpha- and beta-tubulin heterodimers. Microtubules grow by the addition of GTP-tubulin dimers to the microtubule end, where a stabilizing cap forms. Below the cap, tubulin dimers are in GDP-bound state, owing to GTPase activity of alpha-tubulin. The sequence is that of Tubulin beta chain (TUB2) from Encephalitozoon cuniculi (strain GB-M1) (Microsporidian parasite).